Reading from the N-terminus, the 443-residue chain is Phosphoglucosamine mutase (443 aa).

The Phosphoserine intermediate role is filled by serine 102. Mg(2+)-binding residues include serine 102, aspartate 241, aspartate 243, and aspartate 245. Serine 102 bears the Phosphoserine mark.

It belongs to the phosphohexose mutase family. It depends on Mg(2+) as a cofactor. In terms of processing, activated by phosphorylation.

It catalyses the reaction alpha-D-glucosamine 1-phosphate = D-glucosamine 6-phosphate. Functionally, catalyzes the conversion of glucosamine-6-phosphate to glucosamine-1-phosphate. The chain is Phosphoglucosamine mutase from Polaromonas naphthalenivorans (strain CJ2).